A 57-amino-acid chain; its full sequence is Potassium channel toxin gamma-KTx 2.1 (57 aa).

The signal sequence occupies residues 1 to 21 (MKISFVLLLTLFICSIGWSEA). Disulfide bonds link cysteine 28–cysteine 49, cysteine 34–cysteine 54, and cysteine 38–cysteine 56.

Belongs to the short scorpion toxin superfamily. Potassium channel inhibitor family. Gamma-KTx 2 subfamily. As to expression, expressed by the venom gland.

It localises to the secreted. Functionally, blocks human and/or rat Kv11.1/KCNH2/ERG1, Kv11.2/KCNH6/ERG2 and Kv11.3/KCNH7/ERG3 by binding to channel outer vestibule (S5P domain) with a 1:1 stoichiometry. Inhibition data are the following: hERG1 (reversible, Kd=7.7 nM, IC(50)=3.3 nM, IC(50)=11.9 nM), rERG1 (reversible, Kd=19 nM), hERG2 (reversible, Kd=77 nM), rERG2 (irreversible, Kd=4.2 nM), hERG3 (reversible, Kd=11.5 nM) and rERG3 (reversible, Kd=747 nM) potassium channels. Also has a minimal effect on rat ELK1/KCNH4 potassium channels (9% inhibition at 100 nM). Both this toxin and CnErgTx1 (AC Q86QT3) share mechanism of action and have overlapping binding sites on ERG1. The potency of these two toxins is not affected by elevating potassium ion concentration from 2 to 98 mM. In addition, at high toxin concentrations, block of ERG1 macroscopic currents by these two toxins is incomplete (88%). The blockade by this toxin is preferentially closed channel state-dependent, with a component of open, but not inactive state-dependent blockade. This toxin produces a concentration-dependent prolongation of QTc in the isolated rabbit heart (16.3% at 100 nM). The sequence is that of Potassium channel toxin gamma-KTx 2.1 from Mesobuthus eupeus (Lesser Asian scorpion).